The chain runs to 354 residues: Alternative oxidase, mitochondrial (354 aa).

The transit peptide at 1 to 64 (MNSMSTTGPI…RFISSTPQSQ (64 aa)) directs the protein to the mitochondrion. The chain crosses the membrane as a helical span at residues 153–173 (FVFLESVAGVPGMVGGMLRHL). Fe cation is bound by residues Glu157, Glu196, and His199. The helical transmembrane segment at 215–235 (LMVLGAQGVFFNGFFLSYLIS) threads the bilayer. Fe cation-binding residues include Glu247, Glu302, and His305. Residues 333-354 (KPHPGKGIKHLKTTGWEREEVV) are disordered. Basic residues predominate over residues 335-344 (HPGKGIKHLK).

It belongs to the alternative oxidase family. Requires Fe cation as cofactor.

The protein resides in the mitochondrion inner membrane. Functionally, catalyzes cyanide-resistant oxygen consumption. May increase respiration when the cytochrome respiratory pathway is restricted, or in response to low temperatures. The polypeptide is Alternative oxidase, mitochondrial (alxA) (Emericella nidulans (strain FGSC A4 / ATCC 38163 / CBS 112.46 / NRRL 194 / M139) (Aspergillus nidulans)).